Reading from the N-terminus, the 1464-residue chain is Nuclear pore complex protein NUP155 (1464 aa).

At serine 2 the chain carries N-acetylserine.

This sequence belongs to the non-repetitive/WGA-negative nucleoporin family. Part of the nuclear pore complex (NPC). The NPC has an eight-fold symmetrical structure comprising a central transport channel and two rings, the cytoplasmic and nuclear rings, to which eight filaments are attached. The cytoplasmic filaments have loose ends, while the nuclear filaments are joined in a distal ring, forming a nuclear basket. NPCs are highly dynamic in configuration and composition, and can be devided in 3 subcomplexes, the NUP62 subcomplex, the NUP107-160 subcomplex and the NUP93 subcomplex, containing approximately 30 different nucleoporin proteins.

The protein localises to the nucleus. The protein resides in the nuclear pore complex. Its function is as follows. Major component of the nuclear pore complex (NPC). The protein is Nuclear pore complex protein NUP155 of Arabidopsis thaliana (Mouse-ear cress).